We begin with the raw amino-acid sequence, 234 residues long: Eukaryotic translation initiation factor 3 subunit K (234 aa).

Residues S46–S219 form the PCI domain.

The protein belongs to the eIF-3 subunit K family. As to quaternary structure, component of the eukaryotic translation initiation factor 3 (eIF-3) complex.

Its subcellular location is the cytoplasm. Component of the eukaryotic translation initiation factor 3 (eIF-3) complex, which is involved in protein synthesis of a specialized repertoire of mRNAs and, together with other initiation factors, stimulates binding of mRNA and methionyl-tRNAi to the 40S ribosome. The eIF-3 complex specifically targets and initiates translation of a subset of mRNAs involved in cell proliferation. This chain is Eukaryotic translation initiation factor 3 subunit K, found in Yarrowia lipolytica (strain CLIB 122 / E 150) (Yeast).